Here is an 868-residue protein sequence, read N- to C-terminus: MSLIRVNRFGPRGGARKTLKVKKKAAVRQEWDNTVNDLTVHRATPEDLVRRHEMHKSKNRALVHWELQEKALKRKWKKQKPETSSIEKRKLSIMKEILSDQYQTQDVLEKSDHLLTAAKGLFVDVPRKRTGFPNVTMAPGSSRSPAGINQDPGTQSILNESIIEPQALNEVDDGGAESTAHSQSEDSESELPNSLSPHSNRNTERFLHQLKEENSELINQLWTDIQQKIAAQSQRTPPGSPSSELSAEDQKGALNATDAVKRIQAGLQPEESAEPVDSSYVGQVLNTRKPKPLLSKVKRKQDMRALSKQKKNMLSSSTTSADLASSNNSSLDVLKHMIHEVEHEMEEYERWTGREVKGLQGGQGLTGFTLSLVSSLCRLVRYLKESETQLRKEVETRQQLEQMLGDHRELIDALTAEILLLREENGAVQARLQQYMVTTDEQLISLTHAIKSCPVINNSRQESQAPERAAMGRRLVDNVGAPVVNSNVSMPLMLKGEEMVDFPQEELPVKLSQGPPPTENLNLASNFPTHIFEPAVMLTPPRQKSNSEFSPLQDVLRRTVQTRPAPRIPPTVEVIEKEQTWEKKNLPIDPDIQNSSEESRLFTQRWRVSHMGDDLENKSQPQFVSLSQPPQFVSLSQPPCSSPPSTQQSRNPVFSEEPTVLGDGQQLGTADALMHRKDIMARIAELTLQNSAMKAHLNNITSSGGEHGDGLREPSRQGNASEVPANFPAVQSLMPSSMEERIAELNRQSMEARSKLLQLIEQQKLVGLTLSSSPVSPVESPLRAWTEEGKRTIEVSVPGVEASESSKCNTVSPVSGVSSRRSSGAISNSCSPLNATSGSGKFTPVNPRTKQTEKQSEEGWFALSAHLP.

Disordered regions lie at residues 129 to 154 (RTGFPNVTMAPGSSRSPAGINQDPGT), 172 to 201 (DDGGAESTAHSQSEDSESELPNSLSPHSNR), 229 to 250 (IAAQSQRTPPGSPSSELSAEDQ), and 291 to 326 (KPLLSKVKRKQDMRALSKQKKNMLSSSTTSADLASS). 2 stretches are compositionally biased toward polar residues: residues 190–200 (ELPNSLSPHSN) and 229–245 (IAAQSQRTPPGSPSSEL). The residue at position 236 (Thr-236) is a Phosphothreonine. Phosphoserine is present on Ser-240. Positions 315-326 (SSSTTSADLASS) are enriched in low complexity. Residues 381–434 (RYLKESETQLRKEVETRQQLEQMLGDHRELIDALTAEILLLREENGAVQARLQQ) are a coiled coil. 2 disordered regions span residues 630 to 664 (PQFVSLSQPPCSSPPSTQQSRNPVFSEEPTVLGDG) and 702 to 722 (SSGGEHGDGLREPSRQGNASE). Residues 634–649 (SLSQPPCSSPPSTQQS) are compositionally biased toward low complexity. Phosphoserine is present on Ser-655. The span at 706-715 (EHGDGLREPS) shows a compositional bias: basic and acidic residues. Residues 736–764 (SSMEERIAELNRQSMEARSKLLQLIEQQK) are a coiled coil. Phosphoserine is present on residues Ser-772, Ser-773, Ser-776, and Ser-831. The disordered stretch occupies residues 805 to 868 (SSKCNTVSPV…GWFALSAHLP (64 aa)). Positions 812–831 (SPVSGVSSRRSSGAISNSCS) are enriched in low complexity.

Interacts with CEP120.

It is found in the cytoplasm. The protein localises to the cytoskeleton. Its subcellular location is the microtubule organizing center. It localises to the centrosome. The protein resides in the centriole. It is found in the spindle. In terms of biological role, regulator required for centriole duplication, for proper bipolar spindle formation and chromosome congression in mitosis. This chain is Spindle and centriole-associated protein 1 (Spice1), found in Rattus norvegicus (Rat).